Reading from the N-terminus, the 146-residue chain is Large ribosomal subunit protein uL15 (146 aa).

Over residues 1-10 the composition is skewed to basic and acidic residues; it reads MTLKLHDLRP. The disordered stretch occupies residues 1-41; the sequence is MTLKLHDLRPARGSKIARTRVGRGDGSKGKTAGRGTKGTRA.

Belongs to the universal ribosomal protein uL15 family. Part of the 50S ribosomal subunit.

Its function is as follows. Binds to the 23S rRNA. This is Large ribosomal subunit protein uL15 from Mycobacterium tuberculosis (strain ATCC 25177 / H37Ra).